Reading from the N-terminus, the 437-residue chain is Vasoactive intestinal polypeptide receptor 2 (437 aa).

The first 22 residues, 1 to 22, serve as a signal peptide directing secretion; it reads MRASVVLTCYCWLLVRVSSIHP. Residues 23–123 are Extracellular-facing; sequence ECRFHLEIQE…EDESKITFYI (101 aa). 3 disulfides stabilise this stretch: cysteine 37–cysteine 60, cysteine 51–cysteine 92, and cysteine 74–cysteine 108. Asparagine 57, asparagine 87, and asparagine 91 each carry an N-linked (GlcNAc...) asparagine glycan. The helical transmembrane segment at 124–149 threads the bilayer; that stretch reads LVKAIYTLGYSVSLMSLTTGSIIICL. The Cytoplasmic portion of the chain corresponds to 150-157; sequence FRKLHCTR. A helical transmembrane segment spans residues 158–179; sequence NYIHLNLFLSFMLRAISVLVKD. Residues 180–202 are Extracellular-facing; sequence SVLYSSSGTLRCHDQPGSWVGCK. Cysteines 201 and 270 form a disulfide. A helical membrane pass occupies residues 203–227; sequence LSLVFFQYCIMANFYWLLVEGLYLH. Over 228–238 the chain is Cytoplasmic; that stretch reads TLLVAILPPSR. Residues 239 to 260 form a helical membrane-spanning segment; sequence CFLAYLLIGWGIPSVCIGAWIA. Over 261 to 279 the chain is Extracellular; it reads TRLSLEDTGCWDTNDHSIP. Residues 280-303 traverse the membrane as a helical segment; the sequence is WWVIRMPILISIVVNFALFISIVR. The Cytoplasmic segment spans residues 304 to 324; the sequence is ILLQKLTSPDVGGNDQSQYKR. The chain crosses the membrane as a helical span at residues 325–345; sequence LAKSTLLLIPLFGVHYMVFAA. Residues 346-353 lie on the Extracellular side of the membrane; the sequence is FPIGISST. A helical membrane pass occupies residues 354-377; it reads YQILFELCVGSFQGLVVAVLYCFL. The Cytoplasmic segment spans residues 378-437; it reads NSEVQCELKRRWRGLCLTQPGSRDYRLHSWSMSRNGSESALQIHRGSRTQSFLQSETSVI.

Belongs to the G-protein coupled receptor 2 family. As to quaternary structure, interacts with ADCYAP1/PACAP (via N-terminal extracellular domain); activated by PACAP27 and CAPAC38 neuropeptides. Interacts with VIP; the interaction results in VIPR1 activation. In terms of tissue distribution, mainly in the thalamus, hippocampus and in the suprachiasmatic nucleus.

It localises to the cell membrane. In terms of biological role, g protein-coupled receptor activated by the neuropeptides vasoactive intestinal peptide (VIP) and pituitary adenylate cyclase-activating polypeptide (ADCYAP1/PACAP). Binds VIP and both PACAP27 and PACAP38 bioactive peptides with the order of ligand affinity of VIP = PACAP38 &gt; PACAP27. Ligand binding causes a conformation change that triggers signaling via guanine nucleotide-binding proteins (G proteins) and modulates the activity of downstream effectors. Activates cAMP-dependent pathway. May be coupled to phospholipase C. The polypeptide is Vasoactive intestinal polypeptide receptor 2 (Rattus norvegicus (Rat)).